We begin with the raw amino-acid sequence, 925 residues long: MGRAGAAANGTPQNVQGITSYQQRITAQHPLPNQSECRKIYRYDGIYCESTYQNLQALRKEKSRDAARSRRGKENFEFYELAKLLPLPAAITSQLDKASIIRLTISYLKMRDFANQGDPPWNLRMEGPPPNTSVKGAQRRRSPSALAIEVFEAHLGSHILQSLDGFVFALNQEGKFLYISETVSIYLGLSQVELTGSSVFDYVHPGDHVEMAEQLGMKLPPGRGLLSQGTTEDAASSASSSSQSETPEPVETTSPSLLTTDNTLERSFFIRMKSTLTKRGVHIKSSGYKVIHITGRLRLRVPLSHGRTVPSQIMGLVVVAHALPPPTINEVRIDCHMFVTRVNMDLNIIYCENRISDYMDLTPVDIVGKRCYHFIHAEDVEGIRHSHLDLLNKGQCVTKYYRWMQKNGGYIWIQSSATIAINAKNANEKNIIWVNYLLSNPEYKDTPMDIAQLPHLPEKASESSETSDSESDSKDTSGITEDNENSKSDEKGNQSENSEDPEPDRKKSGSACDNDMNCNDDGHSSSNPDSRDSDDSFEHSDFEHPKAAEDGFGALGPMQIKVERYVESEADLRLQPCESLTSDSAKDSDSANEAGAQASSKHQKRKRRRKRQKGGSASRRRLSSASSPGLDAGLVEPPRLLSSPHSASVLKIKTEIAEPINFDNESSIWNYPPNREISRNESPYSMTKPPTSEHFPSPQGQGGSIGGGGALHVAIPDSVLTPPGADGTAGRKTQFSGTAPVPSDPLSPPLSASPRDKHPGGGAGSGGGGPGASNSLLYTGDLEALQRLQAGNVVLPLVHRVTGTLAATSTAAQRVYTTGTIRYAPAEVTLAMQGNLLPNAHAVNFVDVNSPGFGLDPKTPMEMLYHHVHRLNMSGPFGGAVSAASLTQMPGGNVFTTAEGLFSTLPFPVYSNGIHAAQTLERKED.

Positions Leu58 to Arg111 constitute a bHLH domain. Residues Lys60–Arg71 are DNA-binding. Disordered regions lie at residues Pro119 to Gln138 and Leu219 to Leu257. One can recognise a PAS 1 domain in the interval Glu152–Gly222. Residues Ala234 to Ser256 show a composition bias toward low complexity. A PAS 2 domain is found at Pro324 to Gly394. The 44-residue stretch at Thr398–Pro441 folds into the PAC domain. Disordered regions lie at residues Pro457–Leu555, Pro576–His645, and Asn664–Asn774. Composition is skewed to basic and acidic residues over residues Glu484–Asn493 and Asp529–Glu549. The segment covering Lys601–Leu622 has biased composition (basic residues). Polar residues predominate over residues Asn680 to Pro690. 2 stretches are compositionally biased toward gly residues: residues Gly700–Ala710 and Gly760–Gly771.

In terms of assembly, efficient DNA binding requires dimerization with another bHLH protein. Interacts with ARNT; forms a heterodimer that binds core DNA sequence 5'-[AG]CGTG-3' within the hypoxia response element (HRE) of target gene promoters. In terms of tissue distribution, detected exclusively in adult brain in inhibitory interneurons.

The protein resides in the nucleus. Its function is as follows. May play a broad role in neurogenesis. May control regulatory pathways relevant to schizophrenia and to psychotic illness. This chain is Neuronal PAS domain-containing protein 3 (Npas3), found in Mus musculus (Mouse).